Consider the following 251-residue polypeptide: Segregation and condensation protein A (251 aa).

Belongs to the ScpA family. In terms of assembly, component of a cohesin-like complex composed of ScpA, ScpB and the Smc homodimer, in which ScpA and ScpB bind to the head domain of Smc. The presence of the three proteins is required for the association of the complex with DNA.

It is found in the cytoplasm. Participates in chromosomal partition during cell division. May act via the formation of a condensin-like complex containing Smc and ScpB that pull DNA away from mid-cell into both cell halves. The protein is Segregation and condensation protein A of Bacillus velezensis (strain DSM 23117 / BGSC 10A6 / LMG 26770 / FZB42) (Bacillus amyloliquefaciens subsp. plantarum).